Consider the following 701-residue polypeptide: Sodium/hydrogen exchanger 6 (701 aa).

The next 2 membrane-spanning stretches (helical) occupy residues 71–91 (SANL…IWLF) and 103–123 (GLAM…IHVP). N-linked (GlcNAc...) asparagine glycosylation is present at Asn128. 8 helical membrane-spanning segments follow: residues 176–196 (VTFD…FYAG), 211–231 (ILAY…SIMY), 252–272 (CLLF…AIFH), 278–298 (VELY…AIVL), 324–344 (IGIF…TGVV), 372–392 (TFLL…FCGI), 414–434 (FELL…LTLF), and 436–456 (FQNH…IFLG). A Glycyl lysine isopeptide (Lys-Gly) (interchain with G-Cter in ubiquitin) cross-link involves residue Lys475. 2 consecutive transmembrane segments (helical) span residues 479-499 (NFQH…ALAI) and 515-535 (LLIV…MLSC).

It belongs to the monovalent cation:proton antiporter 1 (CPA1) transporter (TC 2.A.36) family. As to quaternary structure, homodimer. Interacts with RACK1; regulates the distribution of SLC9A6 between endosomes and the plasma membrane. Post-translationally, ubiquitinated (in vitro). In terms of processing, glycosylated. In terms of tissue distribution, ubiquitous. High expression in brain, skeletal muscle, and heart, but is also detected at lower levels in most other tissues.

It is found in the endosome membrane. The protein resides in the recycling endosome membrane. The protein localises to the early endosome membrane. It localises to the late endosome membrane. Its subcellular location is the cell membrane. It carries out the reaction Na(+)(in) + H(+)(out) = Na(+)(out) + H(+)(in). The enzyme catalyses K(+)(in) + H(+)(out) = K(+)(out) + H(+)(in). Endosomal Na(+), K(+)/H(+) antiporter. Mediates the electroneutral exchange of endosomal luminal H(+) for a cytosolic Na(+) or K(+). By facilitating proton efflux, SLC9A6 counteracts the acidity generated by vacuolar (V)-ATPase, thereby limiting luminal acidification. Responsible for alkalizing and maintaining the endosomal pH, and consequently in, e.g., endosome maturation and trafficking of recycling endosomal cargo. Plays a critical role during neurodevelopment by regulating synaptic development and plasticity. Implicated in the maintenance of cell polarity in a manner that is dependent on its ability to modulate intravesicular pH. Regulates intracelular pH in some specialized cells, osteoclasts and stereocilia where this transporter localizes to the plasma membrane. This Homo sapiens (Human) protein is Sodium/hydrogen exchanger 6.